The following is a 247-amino-acid chain: C-X-C motif chemokine 16 (247 aa).

Positions 1-26 are cleaved as a signal peptide; it reads MRRGFGPLALTLFLFFFALLTLPGDG. Residues 27–198 lie on the Extracellular side of the membrane; it reads NQGSVAGSCY…EPGAGAGTQA (172 aa). 2 disulfides stabilise this stretch: Cys35–Cys65 and Cys37–Cys79. The tract at residues 120–152 is disordered; it reads IPEATEGKPPDTSTAVQFQSTQQSTFPSGAPSL. Over residues 131–147 the composition is skewed to low complexity; the sequence is TSTAVQFQSTQQSTFPS. A helical transmembrane segment spans residues 199–219; it reads LVPVLSLLAIVFFLVAAMVCV. Residues 220–247 lie on the Cytoplasmic side of the membrane; it reads LCNRRVTRQSSSGLQLCYTPVEPRPQGL.

The protein belongs to the intercrine alpha (chemokine CxC) family. In terms of processing, glycosylated.

Its subcellular location is the membrane. Induces a strong chemotactic response. Induces calcium mobilization. Binds to CXCR6/Bonzo. Also acts as a scavenger receptor on macrophages, which specifically binds to OxLDL (oxidized low density lipoprotein), suggesting that it may be involved in pathophysiology such as atherogenesis. The polypeptide is C-X-C motif chemokine 16 (Cxcl16) (Rattus norvegicus (Rat)).